Consider the following 378-residue polypeptide: uncharacterized protein (378 aa).

It belongs to the IIV-6 329R family.

This is an uncharacterized protein from Acheta domesticus (House cricket).